Consider the following 239-residue polypeptide: Ribonuclease 3 (239 aa).

The RNase III domain maps to 12–137 (RAKLEGLIGH…LIAAIYLDGG (126 aa)). Mg(2+) is bound at residue Glu-50. Residue Asp-54 is part of the active site. The Mg(2+) site is built by Asp-123 and Glu-126. Glu-126 is an active-site residue. The 70-residue stretch at 162 to 231 (DAKTELQEWS…ATKMLEREGI (70 aa)) folds into the DRBM domain.

This sequence belongs to the ribonuclease III family. As to quaternary structure, homodimer. Mg(2+) is required as a cofactor.

Its subcellular location is the cytoplasm. It catalyses the reaction Endonucleolytic cleavage to 5'-phosphomonoester.. Digests double-stranded RNA. Involved in the processing of primary rRNA transcript to yield the immediate precursors to the large and small rRNAs (23S and 16S). Processes some mRNAs, and tRNAs when they are encoded in the rRNA operon. Processes pre-crRNA and tracrRNA of type II CRISPR loci if present in the organism. In Rhizobium johnstonii (strain DSM 114642 / LMG 32736 / 3841) (Rhizobium leguminosarum bv. viciae), this protein is Ribonuclease 3.